We begin with the raw amino-acid sequence, 137 residues long: MGLLDHLWDDTVAGPRPENGLGKLRKHHTFSFRPSSGNDQSEAGSARSYGEDSLPEEAVKVTRSIMIIKPPGYQGSSAPASPAGSTPPLSPFSPPLSPFSGGKEPFRFRRRSTSDAFEKAAGGSETGPRSSPPTYGM.

Disordered regions lie at residues 1–55 (MGLL…DSLP) and 69–137 (KPPG…TYGM). Residues 32–43 (FRPSSGNDQSEA) show a composition bias toward polar residues. Residues 70 to 87 (PPGYQGSSAPASPAGSTP) are compositionally biased toward low complexity. At Ser81 the chain carries Phosphoserine. Residues 88-97 (PLSPFSPPLS) show a composition bias toward pro residues. The segment covering 104–118 (EPFRFRRRSTSDAFE) has biased composition (basic and acidic residues). The span at 127–137 (GPRSSPPTYGM) shows a compositional bias: polar residues.

The protein belongs to the DRM1/ARP family.

This chain is Dormancy-associated protein homolog 3, found in Arabidopsis thaliana (Mouse-ear cress).